A 592-amino-acid polypeptide reads, in one-letter code: RNA-binding protein 47 (592 aa).

Low complexity predominate over residues 1 to 24; the sequence is MTAEDAAAAMSSDSAAGGAASAKA. Residues 1-26 are disordered; sequence MTAEDAAAAMSSDSAAGGAASAKAPE. RRM domains follow at residues 73–151, 153–235, and 248–320; these read CEVF…CSVD, CRLF…WAEP, and KILY…LAKP. Asymmetric dimethylarginine; alternate occurs at positions 397 and 408. 2 positions are modified to omega-N-methylarginine; alternate: R397 and R408.

The protein belongs to the RRM RBM47 family. Homodimer. Interacts with A1CF. Interacts with APOBEC1; form an mRNA editing complex. Interacts with RBPMS.

Its subcellular location is the nucleus. The protein localises to the cytoplasm. In terms of biological role, single-stranded RNA-binding protein that functions in a variety of RNA processes, including alternative splicing, RNA stabilization, and RNA editing. Functions as an enzyme-substrate adapter for the cytidine deaminase APOBEC1. With APOBEC1 forms an mRNA editing complex involved into cytidine to uridine editing of a variety of mRNA molecules. Through the binding of their 3'UTR, also stabilizes a variety of mRNAs and regulates the expression of genes such as the interferon alpha/beta receptor and interleukin-10. Also involved in the alternative splicing of several genes including TJP1. Binds the pre-mRNA (U)GCAUG consensus sequences in downstream intronic regions of alternative exons, regulating their exclusion and inclusion into mRNAs. Independently of its RNA-binding activity, could negatively regulate MAVS by promoting its lysosomal degradation. This Canis lupus familiaris (Dog) protein is RNA-binding protein 47.